The following is a 220-amino-acid chain: Small ribosomal subunit protein uS3 (220 aa).

The region spanning 38 to 106 is the KH type-2 domain; it reads IRKYVKGRLK…RVHININEIK (69 aa).

Belongs to the universal ribosomal protein uS3 family. Part of the 30S ribosomal subunit. Forms a tight complex with proteins S10 and S14.

Binds the lower part of the 30S subunit head. Binds mRNA in the 70S ribosome, positioning it for translation. This chain is Small ribosomal subunit protein uS3, found in Brevibacillus brevis (strain 47 / JCM 6285 / NBRC 100599).